The sequence spans 473 residues: Trigger factor (473 aa).

Residues 174-261 (GDIAVVSFKG…LKDLKEKELP (88 aa)) enclose the PPIase FKBP-type domain. The segment at 442-473 (ATKLTTKTTTKATTKKGVKTKSKPKVNKKEKN) is disordered. Residues 444–453 (KLTTKTTTKA) show a composition bias toward low complexity. Residues 454-467 (TTKKGVKTKSKPKV) show a composition bias toward basic residues.

This sequence belongs to the FKBP-type PPIase family. Tig subfamily.

The protein resides in the cytoplasm. The enzyme catalyses [protein]-peptidylproline (omega=180) = [protein]-peptidylproline (omega=0). Functionally, involved in protein export. Acts as a chaperone by maintaining the newly synthesized protein in an open conformation. Functions as a peptidyl-prolyl cis-trans isomerase. This chain is Trigger factor, found in Prochlorococcus marinus subsp. pastoris (strain CCMP1986 / NIES-2087 / MED4).